A 338-amino-acid chain; its full sequence is Anthranilate phosphoribosyltransferase (338 aa).

Residues Gly-80, 83-84, Thr-88, 90-93, 108-116, and Ser-120 contribute to the 5-phospho-alpha-D-ribose 1-diphosphate site; these read GD, NIST, and KHGNRSVSS. An anthranilate-binding site is contributed by Gly-80. Ser-92 contributes to the Mg(2+) binding site. Anthranilate is bound at residue Asn-111. Arg-166 serves as a coordination point for anthranilate. Asp-225 and Glu-226 together coordinate Mg(2+).

This sequence belongs to the anthranilate phosphoribosyltransferase family. As to quaternary structure, homodimer. Mg(2+) serves as cofactor.

The catalysed reaction is N-(5-phospho-beta-D-ribosyl)anthranilate + diphosphate = 5-phospho-alpha-D-ribose 1-diphosphate + anthranilate. Its pathway is amino-acid biosynthesis; L-tryptophan biosynthesis; L-tryptophan from chorismate: step 2/5. Functionally, catalyzes the transfer of the phosphoribosyl group of 5-phosphorylribose-1-pyrophosphate (PRPP) to anthranilate to yield N-(5'-phosphoribosyl)-anthranilate (PRA). The sequence is that of Anthranilate phosphoribosyltransferase from Desulfatibacillum aliphaticivorans.